The sequence spans 133 residues: Small ribosomal subunit protein uS8 (133 aa).

Belongs to the universal ribosomal protein uS8 family. In terms of assembly, part of the 30S ribosomal subunit. Contacts proteins S5 and S12.

Its function is as follows. One of the primary rRNA binding proteins, it binds directly to 16S rRNA central domain where it helps coordinate assembly of the platform of the 30S subunit. The protein is Small ribosomal subunit protein uS8 of Prochlorococcus marinus (strain AS9601).